Here is a 119-residue protein sequence, read N- to C-terminus: Large ribosomal subunit protein bL20 (119 aa).

The protein belongs to the bacterial ribosomal protein bL20 family.

Binds directly to 23S ribosomal RNA and is necessary for the in vitro assembly process of the 50S ribosomal subunit. It is not involved in the protein synthesizing functions of that subunit. This is Large ribosomal subunit protein bL20 from Granulibacter bethesdensis (strain ATCC BAA-1260 / CGDNIH1).